The following is a 529-amino-acid chain: Peptide chain release factor 3 (529 aa).

Residues 11 to 280 (AARRTFAIIS…GLVAWAPPPM (270 aa)) form the tr-type G domain. GTP-binding positions include 20–27 (SHPDAGKT), 88–92 (DTPGH), and 142–145 (NKVD).

The protein belongs to the TRAFAC class translation factor GTPase superfamily. Classic translation factor GTPase family. PrfC subfamily.

Its subcellular location is the cytoplasm. Increases the formation of ribosomal termination complexes and stimulates activities of RF-1 and RF-2. It binds guanine nucleotides and has strong preference for UGA stop codons. It may interact directly with the ribosome. The stimulation of RF-1 and RF-2 is significantly reduced by GTP and GDP, but not by GMP. This is Peptide chain release factor 3 from Sodalis glossinidius (strain morsitans).